A 114-amino-acid chain; its full sequence is DNA-binding protein Mbur_0117 (114 aa).

The interval 14–37 (ELQQQQSSPQNDAQAAYQQEQAQA) is disordered. Residues 16–35 (QQQQSSPQNDAQAAYQQEQA) show a composition bias toward low complexity.

It belongs to the PDCD5 family.

This chain is DNA-binding protein Mbur_0117, found in Methanococcoides burtonii (strain DSM 6242 / NBRC 107633 / OCM 468 / ACE-M).